A 363-amino-acid chain; its full sequence is DNA replication and repair protein RecF (363 aa).

30–37 (GPNGSGKT) contacts ATP.

This sequence belongs to the RecF family.

The protein resides in the cytoplasm. The RecF protein is involved in DNA metabolism; it is required for DNA replication and normal SOS inducibility. RecF binds preferentially to single-stranded, linear DNA. It also seems to bind ATP. This Vibrio cholerae serotype O1 (strain ATCC 39541 / Classical Ogawa 395 / O395) protein is DNA replication and repair protein RecF.